The sequence spans 251 residues: Zinc import ATP-binding protein ZnuC (251 aa).

The 216-residue stretch at 5–220 (VSLENVSVSF…PEFISMFGPR (216 aa)) folds into the ABC transporter domain. Residue 37 to 44 (GPNGAGKS) participates in ATP binding.

This sequence belongs to the ABC transporter superfamily. Zinc importer (TC 3.A.1.15.5) family. As to quaternary structure, the complex is composed of two ATP-binding proteins (ZnuC), two transmembrane proteins (ZnuB) and a solute-binding protein (ZnuA).

The protein resides in the cell inner membrane. The enzyme catalyses Zn(2+)(out) + ATP(in) + H2O(in) = Zn(2+)(in) + ADP(in) + phosphate(in) + H(+)(in). Its function is as follows. Part of the ABC transporter complex ZnuABC involved in zinc import. Responsible for energy coupling to the transport system. The polypeptide is Zinc import ATP-binding protein ZnuC (Shigella dysenteriae serotype 1 (strain Sd197)).